The chain runs to 177 residues: GTP-dependent dephospho-CoA kinase (177 aa).

The GTP site is built by D45, V46, V47, D64, and E120.

It belongs to the GTP-dependent DPCK family.

The catalysed reaction is 3'-dephospho-CoA + GTP = GDP + CoA + H(+). The protein operates within cofactor biosynthesis; coenzyme A biosynthesis. Catalyzes the GTP-dependent phosphorylation of the 3'-hydroxyl group of dephosphocoenzyme A to form coenzyme A (CoA). This Halobacterium salinarum (strain ATCC 29341 / DSM 671 / R1) protein is GTP-dependent dephospho-CoA kinase.